Reading from the N-terminus, the 504-residue chain is 2,3-bisphosphoglycerate-independent phosphoglycerate mutase (504 aa).

Asp9 and Ser59 together coordinate Mn(2+). Ser59 serves as the catalytic Phosphoserine intermediate. Residues His120, 149 to 150 (RD), Arg181, Arg187, 253 to 256 (RPDR), and Lys326 each bind substrate. Mn(2+) contacts are provided by Asp393, His397, Asp434, His435, and His451.

Belongs to the BPG-independent phosphoglycerate mutase family. Requires Mn(2+) as cofactor.

It catalyses the reaction (2R)-2-phosphoglycerate = (2R)-3-phosphoglycerate. It functions in the pathway carbohydrate degradation; glycolysis; pyruvate from D-glyceraldehyde 3-phosphate: step 3/5. Its function is as follows. Catalyzes the interconversion of 2-phosphoglycerate and 3-phosphoglycerate. The polypeptide is 2,3-bisphosphoglycerate-independent phosphoglycerate mutase (Haloquadratum walsbyi (strain DSM 16790 / HBSQ001)).